A 454-amino-acid polypeptide reads, in one-letter code: Dihydrolipoyllysine-residue succinyltransferase component of 2-oxoglutarate dehydrogenase complex, mitochondrial (454 aa).

Residues 1-68 constitute a mitochondrion transit peptide; the sequence is MLSRSRCVSR…RFFQTTAVCK (68 aa). Positions 71–145 constitute a Lipoyl-binding domain; it reads VITVQTPAFA…EGGTPLFTLR (75 aa). At Ser-82 the chain carries Phosphoserine. Lys-111 is subject to N6-lipoyllysine. Positions 147–227 are disordered; it reads TGAAPAKAKP…KGLRSEHREK (81 aa). Residues 149-163 are compositionally biased toward low complexity; it reads AAPAKAKPAETPAPA. At Lys-155 the chain carries N6-acetyllysine. The span at 186 to 197 shows a compositional bias: pro residues; it reads PPVPSPSQPPSS. Low complexity predominate over residues 198–217; that stretch reads KPVSAIKPTAAPPLAEAGAA. Residues Lys-268, Lys-273, Lys-274, Lys-278, and Lys-308 each carry the N6-acetyllysine modification. Catalysis depends on residues His-425 and Asp-429.

The protein belongs to the 2-oxoacid dehydrogenase family. As to quaternary structure, the 2-oxoglutarate dehydrogenase complex is composed of OGDH (2-oxoglutarate dehydrogenase; E1), DLST (dihydrolipoamide succinyltransferase; E2), DLD (dihydrolipoamide dehydrogenase; E3) and the assembly factor KGD4. It contains multiple copies of the three enzymatic components (E1, E2 and E3). In the nucleus, the 2-oxoglutarate dehydrogenase complex associates with KAT2A. Interacts with ABHD11; this interaction maintains the functional lipoylation of the 2-oxoglutarate dehydrogenase complex. The cofactor is (R)-lipoate.

Its subcellular location is the mitochondrion matrix. The protein resides in the nucleus. It carries out the reaction N(6)-[(R)-dihydrolipoyl]-L-lysyl-[protein] + succinyl-CoA = N(6)-[(R)-S(8)-succinyldihydrolipoyl]-L-lysyl-[protein] + CoA. It functions in the pathway amino-acid degradation; L-lysine degradation via saccharopine pathway; glutaryl-CoA from L-lysine: step 6/6. It participates in carbohydrate metabolism; tricarboxylic acid cycle. Functionally, dihydrolipoamide succinyltransferase (E2) component of the 2-oxoglutarate dehydrogenase complex. The 2-oxoglutarate dehydrogenase complex catalyzes the overall conversion of 2-oxoglutarate to succinyl-CoA and CO(2). The 2-oxoglutarate dehydrogenase complex is mainly active in the mitochondrion. A fraction of the 2-oxoglutarate dehydrogenase complex also localizes in the nucleus and is required for lysine succinylation of histones: associates with KAT2A on chromatin and provides succinyl-CoA to histone succinyltransferase KAT2A. In Mus musculus (Mouse), this protein is Dihydrolipoyllysine-residue succinyltransferase component of 2-oxoglutarate dehydrogenase complex, mitochondrial.